A 446-amino-acid chain; its full sequence is DDB1- and CUL4-associated factor 12 (446 aa).

Over residues methionine 1–alanine 12 the composition is skewed to basic residues. Positions methionine 1–arginine 33 are disordered. WD repeat units follow at residues serine 132–valine 173, glycine 177–serine 215, proline 245–leucine 284, and glutamate 333–aspartate 370.

Belongs to the WD repeat DCAF12 family. As to quaternary structure, component of the DCX(DCAF12) E3 ubiquitin ligase complex, at least composed of cul4 (cul4a or cul4b), ddb1, dcaf12 and rbx1.

Its subcellular location is the cytoplasm. The protein resides in the cytoskeleton. It localises to the microtubule organizing center. It is found in the centrosome. The protein localises to the nucleus. It participates in protein modification; protein ubiquitination. Its function is as follows. Substrate-recognition component of a DCX (DDB1-CUL4-X-box) E3 ubiquitin-protein ligase complex of the DesCEND (destruction via C-end degrons) pathway, which recognizes a C-degron located at the extreme C terminus of target proteins, leading to their ubiquitination and degradation. The C-degron recognized by the DesCEND pathway is usually a motif of less than ten residues and can be present in full-length proteins, truncated proteins or proteolytically cleaved forms. The DCX(DCAF12) complex specifically recognizes proteins with a diglutamate (Glu-Glu) at the C-terminus leading to their ubiquitination and degradation. Also directly recognizes the C-terminal glutamate-leucine (Glu-Leu) degron as an alternative degron in proteins leading to their ubiquitination and degradation. In Xenopus tropicalis (Western clawed frog), this protein is DDB1- and CUL4-associated factor 12.